The chain runs to 371 residues: Envelope glycoprotein M (371 aa).

The Intravirion segment spans residues 1–13; it reads MAPSHVDKVNTRT. A helical transmembrane segment spans residues 14 to 34; that stretch reads WSASIVFMVLTFVNVSVHLVL. Topologically, residues 35–79 are virion surface; the sequence is SNFPHLGYPCVYYHVVDFERLNMSAYNVMHLHTPMLFLDSVQLVC. A helical membrane pass occupies residues 80-100; sequence YAVFMQLVFLAVTIYYLVCWI. The Intravirion portion of the chain corresponds to 101-126; that stretch reads KISMRKDKGMSLNQSTRDISYMGDSL. The chain crosses the membrane as a helical span at residues 127-147; it reads TAFLFILSMDTFQLFTLTMSF. The Virion surface portion of the chain corresponds to 148 to 151; that stretch reads RLPS. The chain crosses the membrane as a helical span at residues 152-172; the sequence is MIAFMAAVHFFCLTIFNVSMV. At 173-200 the chain is on the intravirion side; it reads TQYRSYKRSLFFFSRLHPKLKGTVQFRT. Residues 201 to 221 traverse the membrane as a helical segment; it reads LIVNLVEVALGFNTTVVAMAL. At 222–239 the chain is on the virion surface side; it reads CYGFGNNFFVRTGHMVLA. Residues 240–260 form a helical membrane-spanning segment; the sequence is VFVVYAIISIIYFLLIEAVFF. Residues 261–264 lie on the Intravirion side of the membrane; the sequence is QYVK. The helical transmembrane segment at 265 to 285 threads the bilayer; the sequence is VQFGYHLGAFFGLCGLIYPIV. Over 286–298 the chain is Virion surface; the sequence is QYDTFLSNEYRTG. A helical membrane pass occupies residues 299–319; the sequence is ISWSFGMLFFIWAMFTTCRAV. Residues 320–371 lie on the Intravirion side of the membrane; the sequence is RYFRGRGSGSVKYQALATASGEEVAALSHHDSLESRRLREEEDDDDEDFEDA. The segment at 346–371 is disordered; it reads LSHHDSLESRRLREEEDDDDEDFEDA. Over residues 347–359 the composition is skewed to basic and acidic residues; the sequence is SHHDSLESRRLRE. Residues 360–371 are compositionally biased toward acidic residues; the sequence is EEDDDDEDFEDA.

This sequence belongs to the herpesviridae glycoprotein M family. In terms of assembly, interacts (via N-terminus) with gN (via N-terminus). The gM-gN heterodimer forms the gCII complex.

It localises to the virion membrane. The protein resides in the host Golgi apparatus. Its subcellular location is the host trans-Golgi network. It is found in the host endosome membrane. The protein localises to the host nucleus inner membrane. Its function is as follows. Envelope glycoprotein important for virion assembly and egress. Plays a role in the correct incorporation of gH-gL into virion membrane. Directs the glycoprotein N (gN) to the host trans-Golgi network. This is Envelope glycoprotein M from Homo sapiens (Human).